Reading from the N-terminus, the 225-residue chain is N-(5'-phosphoribosyl)anthranilate isomerase (225 aa).

The protein belongs to the TrpF family.

It catalyses the reaction N-(5-phospho-beta-D-ribosyl)anthranilate = 1-(2-carboxyphenylamino)-1-deoxy-D-ribulose 5-phosphate. It functions in the pathway amino-acid biosynthesis; L-tryptophan biosynthesis; L-tryptophan from chorismate: step 3/5. This chain is N-(5'-phosphoribosyl)anthranilate isomerase, found in Nitrobacter winogradskyi (strain ATCC 25391 / DSM 10237 / CIP 104748 / NCIMB 11846 / Nb-255).